Reading from the N-terminus, the 418-residue chain is Tyrosine--tRNA ligase (418 aa).

Tyr-34 is an L-tyrosine binding site. A 'HIGH' region motif is present at residues 39-48 (PTGDSMHIGH). L-tyrosine is bound by residues Tyr-166 and Gln-170. Residues 228–232 (KFGKT) carry the 'KMSKS' region motif. Residue Lys-231 coordinates ATP. The S4 RNA-binding domain occupies 350 to 417 (TNIVELLTET…KKNYFLAKVK (68 aa)).

It belongs to the class-I aminoacyl-tRNA synthetase family. TyrS type 1 subfamily. Homodimer.

Its subcellular location is the cytoplasm. The catalysed reaction is tRNA(Tyr) + L-tyrosine + ATP = L-tyrosyl-tRNA(Tyr) + AMP + diphosphate + H(+). In terms of biological role, catalyzes the attachment of tyrosine to tRNA(Tyr) in a two-step reaction: tyrosine is first activated by ATP to form Tyr-AMP and then transferred to the acceptor end of tRNA(Tyr). The polypeptide is Tyrosine--tRNA ligase (Levilactobacillus brevis (Lactobacillus brevis)).